The following is a 436-amino-acid chain: Trigger factor (436 aa).

The PPIase FKBP-type domain maps to 161–246 (GDQVNIDFVG…VNSVAAPQLP (86 aa)).

This sequence belongs to the FKBP-type PPIase family. Tig subfamily.

It is found in the cytoplasm. The catalysed reaction is [protein]-peptidylproline (omega=180) = [protein]-peptidylproline (omega=0). Functionally, involved in protein export. Acts as a chaperone by maintaining the newly synthesized protein in an open conformation. Functions as a peptidyl-prolyl cis-trans isomerase. The sequence is that of Trigger factor from Stutzerimonas stutzeri (strain A1501) (Pseudomonas stutzeri).